An 874-amino-acid polypeptide reads, in one-letter code: Cap-specific mRNA (nucleoside-2'-O-)-methyltransferase 1A (874 aa).

Residues 1–10 (MSERGDDDRT) show a composition bias toward basic and acidic residues. Residues 1–64 (MSERGDDDRT…APPTKQKTKA (64 aa)) are disordered. In terms of domain architecture, G-patch spans 60 to 106 (QKTKAEEMMERMGYKAGEGLGKNKQGIQEPVALSTQRGKTGLGHEGA). One can recognise a RrmJ-type SAM-dependent 2'-O-MTase domain in the interval 211-440 (FFQNRAAMKT…ERYITCKGLR (230 aa)). S-adenosyl-L-methionine contacts are provided by glycine 273 and aspartate 354. Residue lysine 394 is the Proton acceptor of the active site. The interval 535-555 (PNKQRPRGGDRGSRNGNQERL) is disordered.

The catalysed reaction is a 5'-end (N(7)-methyl 5'-triphosphoguanosine)-ribonucleoside in mRNA + S-adenosyl-L-methionine = a 5'-end (N(7)-methyl 5'-triphosphoguanosine)-(2'-O-methyl-ribonucleoside) in mRNA + S-adenosyl-L-homocysteine + H(+). S-adenosyl-L-methionine-dependent methyltransferase that mediates mRNA cap1 2'-O-ribose methylation to the 5'-cap structure of mRNAs. Methylates the ribose of the first nucleotide of a m(7)GpppG-capped mRNA to produce m(7)GpppNmp (cap1). Cap1 modification is linked to higher levels of translation. This Caenorhabditis briggsae protein is Cap-specific mRNA (nucleoside-2'-O-)-methyltransferase 1A.